A 316-amino-acid chain; its full sequence is Transaldolase (316 aa).

Lysine 131 acts as the Schiff-base intermediate with substrate in catalysis.

Belongs to the transaldolase family. Type 1 subfamily. As to quaternary structure, homodimer.

It is found in the cytoplasm. The enzyme catalyses D-sedoheptulose 7-phosphate + D-glyceraldehyde 3-phosphate = D-erythrose 4-phosphate + beta-D-fructose 6-phosphate. It functions in the pathway carbohydrate degradation; pentose phosphate pathway; D-glyceraldehyde 3-phosphate and beta-D-fructose 6-phosphate from D-ribose 5-phosphate and D-xylulose 5-phosphate (non-oxidative stage): step 2/3. Functionally, transaldolase is important for the balance of metabolites in the pentose-phosphate pathway. In Buchnera aphidicola subsp. Acyrthosiphon pisum (strain 5A), this protein is Transaldolase.